The primary structure comprises 566 residues: Solute carrier family 22 member 16 (566 aa).

The helical transmembrane segment at 20–40 threads the bilayer; it reads FASAFQTISCGIHYLASVFIA. Residues Asn-52, Asn-60, and Asn-112 are each glycosylated (N-linked (GlcNAc...) asparagine). A run of 5 helical transmembrane segments spans residues 149 to 169, 176 to 196, 201 to 221, 237 to 257, and 261 to 281; these read LIQP…GDIA, PIIW…AFTF, FVIV…VVFV, MHVH…GFLV, and WIYQ…CWML. Residue Asn-344 is glycosylated (N-linked (GlcNAc...) asparagine). The next 6 membrane-spanning stretches (helical) occupy residues 351–371, 381–401, 408–428, 436–456, 468–488, and 493–513; these read TITV…FALN, LNLF…CLGM, NTLA…MLIP, IAMS…IYLY, LAVG…PFCV, and VWIF…GILT.

Belongs to the major facilitator (TC 2.A.1) superfamily. Organic cation transporter (TC 2.A.1.19) family.

It is found in the membrane. Its function is as follows. High affinity carnitine transporter. The chain is Solute carrier family 22 member 16 (slc22a16) from Xenopus laevis (African clawed frog).